The following is a 341-amino-acid chain: Inactive caspase-12 (341 aa).

The region spanning 1 to 92 is the CARD domain; it reads MADEKPSNGV…QLSSDISSDG (92 aa). Phosphoserine is present on residues serine 85 and serine 90. Residues histidine 172 and cysteine 220 contribute to the active site.

The protein belongs to the peptidase C14A family. As to expression, widely expressed, with highest levels in lung.

Its function is as follows. May function as a negative regulator of inflammatory responses and innate immunity. May reduce cytokine release in response to bacterial lipopolysaccharide during infection. Reduces activation of NF-kappa-B in response to TNF. May lack protease activity. The protein is Inactive caspase-12 (CASP12) of Homo sapiens (Human).